Consider the following 341-residue polypeptide: MFLSDFDYELPPELIAQHPASRRDASRLLTLDRLSGAIGEATVASIAAQFLPGDLLVLNDTRVIPARLHGHKESGGAVEIFLVRRVAGEPECWSCLIKASKSPKNGCRVVFPGGVTATVLERDGGDWRVLFEGSDDFMAWLEQTGSMPLPPYIKRAPEGEDLERYQTVFAREKGAVAAPTAGLHFTPAILDEIRGRGVEIVSVTLHVGLGTFMPIRVEDLSEHTMHRELYRIPQETAAAIRRTKERGGRVVALGTTSLRALEHAAASGEVAAGEREADIFILPGYRFRVVDALITNFHLPKSTLFMLVCAFAGKEAMLEAYREAVSRRFRFFSYGDAMFIG.

Belongs to the QueA family. Monomer.

It localises to the cytoplasm. The enzyme catalyses 7-aminomethyl-7-carbaguanosine(34) in tRNA + S-adenosyl-L-methionine = epoxyqueuosine(34) in tRNA + adenine + L-methionine + 2 H(+). The protein operates within tRNA modification; tRNA-queuosine biosynthesis. Its function is as follows. Transfers and isomerizes the ribose moiety from AdoMet to the 7-aminomethyl group of 7-deazaguanine (preQ1-tRNA) to give epoxyqueuosine (oQ-tRNA). The chain is S-adenosylmethionine:tRNA ribosyltransferase-isomerase from Citrifermentans bemidjiense (strain ATCC BAA-1014 / DSM 16622 / JCM 12645 / Bem) (Geobacter bemidjiensis).